The primary structure comprises 147 residues: UPF0306 protein YE0465 (147 aa).

Belongs to the UPF0306 family.

The chain is UPF0306 protein YE0465 from Yersinia enterocolitica serotype O:8 / biotype 1B (strain NCTC 13174 / 8081).